Here is a 260-residue protein sequence, read N- to C-terminus: Acetylglutamate kinase (260 aa).

Residues 41 to 42 (GG), Arg63, and Asn156 each bind substrate.

This sequence belongs to the acetylglutamate kinase family. ArgB subfamily.

The protein localises to the cytoplasm. It carries out the reaction N-acetyl-L-glutamate + ATP = N-acetyl-L-glutamyl 5-phosphate + ADP. Its pathway is amino-acid biosynthesis; L-arginine biosynthesis; N(2)-acetyl-L-ornithine from L-glutamate: step 2/4. Its function is as follows. Catalyzes the ATP-dependent phosphorylation of N-acetyl-L-glutamate. This is Acetylglutamate kinase from Halalkalibacterium halodurans (strain ATCC BAA-125 / DSM 18197 / FERM 7344 / JCM 9153 / C-125) (Bacillus halodurans).